The sequence spans 1231 residues: Multifunctional 2-oxoglutarate metabolism enzyme (1231 aa).

A 2-oxoglutarate dehydrogenase E1, N-terminal part region spans residues 1-41; the sequence is MANISSPFGQNEWLVEAMYRKFRDDPSSVDPSWHEFLVDYS. Residues 24-37 are compositionally biased toward basic and acidic residues; sequence DDPSSVDPSWHEFL. Residues 24–56 are disordered; the sequence is DDPSSVDPSWHEFLVDYSPEPTSQPAAEPTRVT. The tract at residues 42–88 is linker; the sequence is PEPTSQPAAEPTRVTSPLVAERAAAAAPQAPPKPADTAAAGNGVVAA. The interval 89–337 is succinyltransferase E2; sequence LAAKTAVPPP…LRTIHELLLS (249 aa). The active-site Proton acceptor; for succinyltransferase activity is the histidine 316. The 2-oxoglutarate dehydrogenase E1, C-terminal part stretch occupies residues 338–1231; it reads DGFWDEVFRE…QQEILDEAFG (894 aa). Thiamine diphosphate is bound at residue arginine 542. Positions 581 and 606 each coordinate 2-oxoglutarate. Positions 606, 608, 649, 650, 651, and 682 each coordinate thiamine diphosphate. Residue aspartate 649 coordinates Mg(2+). 2 residues coordinate Mg(2+): asparagine 682 and isoleucine 684. The stretch at 787-817 forms a coiled coil; sequence DISMKEAEDALRDYQGQLERVFNEVRELEKH. Histidine 1024 contributes to the 2-oxoglutarate binding site. Acetyl-CoA-binding residues include threonine 1042, arginine 1058, lysine 1093, serine 1096, glutamine 1146, arginine 1153, and arginine 1154.

Belongs to the 2-oxoacid dehydrogenase family. Kgd subfamily. As to quaternary structure, homodimer. The 2-oxoglutarate dehydrogenase (ODH) complex contains multiple copies of three enzymatic components: 2-oxoglutarate dehydrogenase (E1), dihydrolipoamide succinyltransferase (E2) and lipoamide dehydrogenase (E3). It depends on Mg(2+) as a cofactor. Thiamine diphosphate is required as a cofactor.

The enzyme catalyses glyoxylate + 2-oxoglutarate + H(+) = 2-hydroxy-3-oxoadipate + CO2. It carries out the reaction 2-oxoglutarate + H(+) = succinate semialdehyde + CO2. The catalysed reaction is N(6)-[(R)-lipoyl]-L-lysyl-[protein] + 2-oxoglutarate + H(+) = N(6)-[(R)-S(8)-succinyldihydrolipoyl]-L-lysyl-[protein] + CO2. It catalyses the reaction N(6)-[(R)-dihydrolipoyl]-L-lysyl-[protein] + succinyl-CoA = N(6)-[(R)-S(8)-succinyldihydrolipoyl]-L-lysyl-[protein] + CoA. Its pathway is carbohydrate metabolism; tricarboxylic acid cycle; succinate from 2-oxoglutarate (transferase route): step 1/2. It functions in the pathway carbohydrate metabolism; tricarboxylic acid cycle; succinyl-CoA from 2-oxoglutarate (dehydrogenase route): step 1/1. Its activity is regulated as follows. Alpha-ketoglutarate dehydrogenase and decarboxylase activities are inhibited by unphosphorylated GarA, and allosterically activated by acetyl-CoA, the main substrate of the TCA cycle. In terms of biological role, shows three enzymatic activities that share a first common step, the attack of thiamine-PP on 2-oxoglutarate (alpha-ketoglutarate, KG), leading to the formation of an enamine-thiamine-PP intermediate upon decarboxylation. Thus, displays KGD activity, catalyzing the decarboxylation from five-carbon 2-oxoglutarate to four-carbon succinate semialdehyde (SSA). Also catalyzes C-C bond formation between the activated aldehyde formed after decarboxylation of alpha-ketoglutarate and the carbonyl of glyoxylate (GLX), to yield 2-hydroxy-3-oxoadipate (HOA), which spontaneously decarboxylates to form 5-hydroxylevulinate (HLA). And is also a component of the 2-oxoglutarate dehydrogenase (ODH) complex, that catalyzes the overall conversion of 2-oxoglutarate to succinyl-CoA and CO(2). The KG decarboxylase and KG dehydrogenase reactions provide two alternative, tightly regulated, pathways connecting the oxidative and reductive branches of the TCA cycle. This chain is Multifunctional 2-oxoglutarate metabolism enzyme (kgd), found in Mycobacterium bovis (strain ATCC BAA-935 / AF2122/97).